The primary structure comprises 254 residues: uncharacterized protein (254 aa).

It belongs to the nucleoside-specific channel-forming outer membrane porin (Tsx) (TC 1.B.10) family.

This is an uncharacterized protein from Escherichia coli (strain K12).